The chain runs to 337 residues: DnaJ homolog dnj-2 (337 aa).

A helical transmembrane segment spans residues 4–24 (AIAAPILFLLVSFFVQECESV). Residues 36-105 (NCYDVLEVNR…EAKTNYDYYL (70 aa)) enclose the J domain. Helical transmembrane passes span 127 to 147 (VDLR…QFLS) and 222 to 242 (LAWH…WTAL). The stretch at 293–323 (LKRNCATWKAERDAAEQEKMAQSGRYKRYKR) forms a coiled coil.

It belongs to the DNAJC25 family.

The protein localises to the membrane. In Caenorhabditis elegans, this protein is DnaJ homolog dnj-2 (dnj-2).